The chain runs to 593 residues: Numb-related protein 1 (593 aa).

4 disordered regions span residues 1-97 (MSAS…WQPD), 235-278 (TAQV…NSRS), 331-375 (LRQG…FGTQ), and 493-581 (MSMS…DPFD). Ser17 is modified (phosphoserine; by PKC). The span at 27–37 (QNSLVSEQQPS) shows a compositional bias: polar residues. Basic residues predominate over residues 64–74 (RSLRLPKKRRD). Residue Ser65 is modified to Phosphoserine; by PKC. Residues 102-255 (RTGTCCFNVK…STSSTPPKDI (154 aa)) form the PID domain. 3 stretches are compositionally biased toward polar residues: residues 236-251 (AQVNVQSAQESTSSTP), 261-278 (EDNTSEGTSTQNPSNSRS), and 354-364 (SLRTVSNNPTE). Low complexity predominate over residues 493–511 (MSMSPTSPSSDPPSTSSYS). A compositionally biased stretch (pro residues) spans 516–528 (SGPPPAHAPPPLP). The span at 532-565 (AVSNGSPSIYQQQLQQANSTRNSPAGINWNSSPN) shows a compositional bias: polar residues.

Interacts with pkc-3. In terms of tissue distribution, expressed in cells comprising the intestine, pharyngeal cells, the anal sphincter and depressor muscles.

The protein localises to the cytoplasm. Its subcellular location is the cell cortex. It localises to the cytoskeleton. The protein resides in the membrane. Functionally, involved in the tethering and targeting of pkc-3 to modulate the intracellular distribution of the kinase. The complex formed with pkc-3 complexes are likely to be involved in assembly, maintenance, and/or regulation of protein complexes that execute asymmetric and/or polarized cell functions. This Caenorhabditis elegans protein is Numb-related protein 1.